Here is a 325-residue protein sequence, read N- to C-terminus: NADH-quinone oxidoreductase subunit H (325 aa).

Transmembrane regions (helical) follow at residues 11 to 31 (ILLS…CGAF), 81 to 101 (VIFT…FAIV), 114 to 134 (IGIL…LFAG), 154 to 174 (LSYE…AGSF), 186 to 206 (LWNV…GVAV), 237 to 257 (FFVG…TLFF), 265 to 285 (LPPF…FILI), and 304 to 324 (VCLP…LWQA).

Belongs to the complex I subunit 1 family. NDH-1 is composed of 13 different subunits. Subunits NuoA, H, J, K, L, M, N constitute the membrane sector of the complex.

It localises to the cell inner membrane. The enzyme catalyses a quinone + NADH + 5 H(+)(in) = a quinol + NAD(+) + 4 H(+)(out). Its function is as follows. NDH-1 shuttles electrons from NADH, via FMN and iron-sulfur (Fe-S) centers, to quinones in the respiratory chain. The immediate electron acceptor for the enzyme in this species is believed to be ubiquinone. Couples the redox reaction to proton translocation (for every two electrons transferred, four hydrogen ions are translocated across the cytoplasmic membrane), and thus conserves the redox energy in a proton gradient. This subunit may bind ubiquinone. The polypeptide is NADH-quinone oxidoreductase subunit H (Klebsiella pneumoniae (strain 342)).